Reading from the N-terminus, the 129-residue chain is Small ribosomal subunit protein uS11 (129 aa).

Belongs to the universal ribosomal protein uS11 family. As to quaternary structure, part of the 30S ribosomal subunit. Interacts with proteins S7 and S18. Binds to IF-3.

Functionally, located on the platform of the 30S subunit, it bridges several disparate RNA helices of the 16S rRNA. Forms part of the Shine-Dalgarno cleft in the 70S ribosome. The protein is Small ribosomal subunit protein uS11 of Azobacteroides pseudotrichonymphae genomovar. CFP2.